A 369-amino-acid polypeptide reads, in one-letter code: Phospho-N-acetylmuramoyl-pentapeptide-transferase (369 aa).

Helical transmembrane passes span 2 to 22 (IAILLAVAFGITFTLFTTPFF), 54 to 74 (GLVIVVASIISYFLANFFLGL), 80 to 100 (GLLVIFMFVGMSLVGFLDDIL), 113 to 133 (FYKVVLQSFIAVPFALLTFLV), 158 to 178 (ALFSLGIIGVFSAWILYLLWI), 195 to 215 (LDGLAAGAMIFTMLAYVVIGF), 241 to 261 (PLDMSILAAAILGSLLGFLWW), 268 to 288 (IMMGDTGALALGGAAAALSIL), 293 to 313 (LLFLVLGGLFVIEAGSVILQI), and 347 to 367 (FWIIAGLFTALGIGLFYADWL).

This sequence belongs to the glycosyltransferase 4 family. MraY subfamily. Mg(2+) serves as cofactor.

It localises to the cell membrane. The enzyme catalyses UDP-N-acetyl-alpha-D-muramoyl-L-alanyl-gamma-D-glutamyl-meso-2,6-diaminopimeloyl-D-alanyl-D-alanine + di-trans,octa-cis-undecaprenyl phosphate = di-trans,octa-cis-undecaprenyl diphospho-N-acetyl-alpha-D-muramoyl-L-alanyl-D-glutamyl-meso-2,6-diaminopimeloyl-D-alanyl-D-alanine + UMP. The protein operates within cell wall biogenesis; peptidoglycan biosynthesis. In terms of biological role, catalyzes the initial step of the lipid cycle reactions in the biosynthesis of the cell wall peptidoglycan: transfers peptidoglycan precursor phospho-MurNAc-pentapeptide from UDP-MurNAc-pentapeptide onto the lipid carrier undecaprenyl phosphate, yielding undecaprenyl-pyrophosphoryl-MurNAc-pentapeptide, known as lipid I. The polypeptide is Phospho-N-acetylmuramoyl-pentapeptide-transferase (Tropheryma whipplei (strain Twist) (Whipple's bacillus)).